The primary structure comprises 537 residues: Mitochondrial distribution and morphology protein 34 (537 aa).

The SMP-LTD domain maps to 1–195; that stretch reads MAFNFNWSPL…LPAIIHRLSL (195 aa). Disordered stretches follow at residues 320 to 339, 348 to 403, 421 to 493, and 516 to 537; these read YTFSDNGSQDQGSLPSRPSL, GLSL…IMPH, GRSP…DTSS, and KNGNPTFWDDQDDTPPPAYEAR. Residues 355–371 are compositionally biased toward basic residues; the sequence is RHSKAGRKKKTRVVNLR. Acidic residues predominate over residues 378 to 391; it reads ANSEEEEDTPETDS. Polar residues predominate over residues 425–441; that stretch reads DLQQQPRRPSFRAQATN.

The protein belongs to the MDM34 family. Component of the ER-mitochondria encounter structure (ERMES) or MDM complex, composed of MMM1, MDM10, MDM12 and MDM34.

The protein resides in the mitochondrion outer membrane. Its function is as follows. Component of the ERMES/MDM complex, which serves as a molecular tether to connect the endoplasmic reticulum (ER) and mitochondria. Components of this complex are involved in the control of mitochondrial shape and protein biogenesis, and function in nonvesicular lipid trafficking between the ER and mitochondria. MDM34 is required for the interaction of the ER-resident membrane protein MMM1 and the outer mitochondrial membrane-resident beta-barrel protein MDM10. This is Mitochondrial distribution and morphology protein 34 from Chaetomium globosum (strain ATCC 6205 / CBS 148.51 / DSM 1962 / NBRC 6347 / NRRL 1970) (Soil fungus).